The chain runs to 455 residues: Argininosuccinate lyase (455 aa).

Belongs to the lyase 1 family. Argininosuccinate lyase subfamily.

It localises to the cytoplasm. It catalyses the reaction 2-(N(omega)-L-arginino)succinate = fumarate + L-arginine. Its pathway is amino-acid biosynthesis; L-arginine biosynthesis; L-arginine from L-ornithine and carbamoyl phosphate: step 3/3. The sequence is that of Argininosuccinate lyase from Shewanella baltica (strain OS223).